The following is a 161-amino-acid chain: Large ribosomal subunit protein uL15 (161 aa).

Over residues 1–13 the composition is skewed to basic and acidic residues; it reads MKLNELRDNEGAA. A disordered region spans residues 1 to 51; it reads MKLNELRDNEGAARKKKRVARGPGSGKGKTAGRGIKGQKSRSGVALNGYEG. A compositionally biased stretch (gly residues) spans 23–35; it reads PGSGKGKTAGRGI.

This sequence belongs to the universal ribosomal protein uL15 family. In terms of assembly, part of the 50S ribosomal subunit.

In terms of biological role, binds to the 23S rRNA. The sequence is that of Large ribosomal subunit protein uL15 from Cereibacter sphaeroides (strain ATCC 17023 / DSM 158 / JCM 6121 / CCUG 31486 / LMG 2827 / NBRC 12203 / NCIMB 8253 / ATH 2.4.1.) (Rhodobacter sphaeroides).